A 259-amino-acid polypeptide reads, in one-letter code: MKILISNDDGYQAPGIVALHDALKTLEGVTVQVVAPEHNNSAKSNALTLHSPLYVHQAASGFRYVNGTPADCVHIALTGLLGYRPDLVVSGINNGANMGDDTIYSGTVGAAMEGYLFGVPAIAFSQVDKGWGELEAAAAKAREIVAQLRAQNLVDPQAPWLLNVNIPNMPLTALRPIALCRLGRRHAAERVIVQQSPRGEAMYWIGGAGPAKDDAQGTDFYATAHGHVSITPLKVDLTDHDSLADWAQTAMRLAPGACI.

Residues Asp-8, Asp-9, Ser-41, and Asn-93 each coordinate a divalent metal cation.

This sequence belongs to the SurE nucleotidase family. A divalent metal cation serves as cofactor.

It is found in the cytoplasm. The enzyme catalyses a ribonucleoside 5'-phosphate + H2O = a ribonucleoside + phosphate. Functionally, nucleotidase that shows phosphatase activity on nucleoside 5'-monophosphates. The sequence is that of 5'-nucleotidase SurE from Verminephrobacter eiseniae (strain EF01-2).